A 269-amino-acid polypeptide reads, in one-letter code: tRNA pseudouridine synthase A (269 aa).

D51 (nucleophile) is an active-site residue. Residue Y109 participates in substrate binding.

Belongs to the tRNA pseudouridine synthase TruA family. In terms of assembly, homodimer.

It catalyses the reaction uridine(38/39/40) in tRNA = pseudouridine(38/39/40) in tRNA. Functionally, formation of pseudouridine at positions 38, 39 and 40 in the anticodon stem and loop of transfer RNAs. In Haemophilus influenzae (strain ATCC 51907 / DSM 11121 / KW20 / Rd), this protein is tRNA pseudouridine synthase A.